The chain runs to 820 residues: MRYDPSLIEKKWQEFWKEHKSFKANEADDKPKYYVLDMFPYPSGAGLHVGHLIGYTATDIVARYKRAKGFSVLHPMGWDSFGLPAEQYAVRTGTHPRETTQKNIENFRKQLSAMGFSYDEGREFATSDPEYYRWTQKLFLLLYEKGLAYMADMAVNYCPELGTVLSNEEVENGLSIEGGYPVERRMLRQWILRITAYSDQLLEGLEGLDWPENVKQLQRNWIGKSEGALVRFKVNNQNFLEVFTTRPDTLCGVSFLVIAPEHPEVGQLIAEDRREEVEAYICRAQSKSERDRISESKIKSGVFTGTYAKHPITGADIPIWVSDYVILGYGSGVVMGVPAHDERDREFAETFSLPIYEVLDTDGYCIHSNHGDFLLDGLWGREAQDYVIAYLQKKNLGESKVAYKLRDWLFSRQRYWGEPIPIIHFEDGTCRPLEDDELPLLPPEIQDYRPEGFGQGPLAKVKEWVDIHDKKTNRQGRRETHTMPQWAGSCWYYLRFCDALNSQAPWSNEKEKYWMPVDLYIGGAEHAVLHLLYSRFWHRVFYDAGMVSTPEPFKKLINQGLVLATSYRIPGKGYVYPEDAHEDNGVWMSTSGEELEVRQEKMSKSKLNGVDPQILIEEFGADALRMYAMFSGPLDKNKLWCNQGVSGCRRFLNRFYELVTSSLVQDIDDPKGMYLAHRLVHRVGEDIEKMSLNTIPSSFMEFINEFVKLDIYPKSALAMVVRALAPIAPHISEELWTILGNAPGIDQAGWPEVDPKYLEDTSVTFVIQVNGKLRARLDISKNAAREEVLSLAREAVSRYLEDKEVKKEIFVPNRLVNFVL.

The short motif at 40–51 (PYPSGAGLHVGH) is the 'HIGH' region element. Positions 601–605 (KMSKS) match the 'KMSKS' region motif. K604 contacts ATP.

The protein belongs to the class-I aminoacyl-tRNA synthetase family.

The protein localises to the cytoplasm. It carries out the reaction tRNA(Leu) + L-leucine + ATP = L-leucyl-tRNA(Leu) + AMP + diphosphate. The sequence is that of Leucine--tRNA ligase from Chlamydia felis (strain Fe/C-56) (Chlamydophila felis).